A 135-amino-acid polypeptide reads, in one-letter code: Cytochrome c-type biogenesis protein CcmE (135 aa).

Over 1 to 8 (MLLLRWKR) the chain is Cytoplasmic. Residues 9–29 (FWFLSLGILLFSGVVSLMLFN) traverse the membrane as a helical; Signal-anchor for type II membrane protein segment. Over 30-135 (LSESISFFYL…EDFIKSVRGE (106 aa)) the chain is Periplasmic. His118 and Tyr122 together coordinate heme.

Belongs to the CcmE/CycJ family.

The protein resides in the cell inner membrane. Heme chaperone required for the biogenesis of c-type cytochromes. Transiently binds heme delivered by CcmC and transfers the heme to apo-cytochromes in a process facilitated by CcmF and CcmH. The sequence is that of Cytochrome c-type biogenesis protein CcmE from Neorickettsia sennetsu (strain ATCC VR-367 / Miyayama) (Ehrlichia sennetsu).